The sequence spans 445 residues: Trigger factor (445 aa).

Positions 166-251 (GDVVVVDFVG…AKALKRPVDV (86 aa)) constitute a PPIase FKBP-type domain.

The protein belongs to the FKBP-type PPIase family. Tig subfamily.

It is found in the cytoplasm. The enzyme catalyses [protein]-peptidylproline (omega=180) = [protein]-peptidylproline (omega=0). In terms of biological role, involved in protein export. Acts as a chaperone by maintaining the newly synthesized protein in an open conformation. Functions as a peptidyl-prolyl cis-trans isomerase. The chain is Trigger factor from Gluconacetobacter diazotrophicus (strain ATCC 49037 / DSM 5601 / CCUG 37298 / CIP 103539 / LMG 7603 / PAl5).